A 146-amino-acid chain; its full sequence is Mite group 2 allergen Der p 2 (146 aa).

The signal sequence occupies residues 1–17; the sequence is MMYKILCLSLLVAAVAR. 3 disulfides stabilise this stretch: C25–C136, C38–C44, and C90–C95.

Belongs to the NPC2 family.

It localises to the secreted. In Dermatophagoides pteronyssinus (European house dust mite), this protein is Mite group 2 allergen Der p 2 (DERP2).